Consider the following 131-residue polypeptide: Holo-[acyl-carrier-protein] synthase (131 aa).

D8 and E59 together coordinate Mg(2+).

Belongs to the P-Pant transferase superfamily. AcpS family. It depends on Mg(2+) as a cofactor.

Its subcellular location is the cytoplasm. It carries out the reaction apo-[ACP] + CoA = holo-[ACP] + adenosine 3',5'-bisphosphate + H(+). Functionally, transfers the 4'-phosphopantetheine moiety from coenzyme A to a Ser of acyl-carrier-protein. The polypeptide is Holo-[acyl-carrier-protein] synthase (Rickettsia rickettsii (strain Sheila Smith)).